Reading from the N-terminus, the 179-residue chain is Large ribosomal subunit protein uL6 (179 aa).

It belongs to the universal ribosomal protein uL6 family. In terms of assembly, part of the 50S ribosomal subunit.

Functionally, this protein binds to the 23S rRNA, and is important in its secondary structure. It is located near the subunit interface in the base of the L7/L12 stalk, and near the tRNA binding site of the peptidyltransferase center. In Streptomyces griseus subsp. griseus (strain JCM 4626 / CBS 651.72 / NBRC 13350 / KCC S-0626 / ISP 5235), this protein is Large ribosomal subunit protein uL6.